The primary structure comprises 301 residues: Glycine--tRNA ligase alpha subunit (301 aa).

This sequence belongs to the class-II aminoacyl-tRNA synthetase family. In terms of assembly, tetramer of two alpha and two beta subunits.

It localises to the cytoplasm. It catalyses the reaction tRNA(Gly) + glycine + ATP = glycyl-tRNA(Gly) + AMP + diphosphate. The sequence is that of Glycine--tRNA ligase alpha subunit from Pseudoalteromonas atlantica (strain T6c / ATCC BAA-1087).